We begin with the raw amino-acid sequence, 133 residues long: Holo-[acyl-carrier-protein] synthase (133 aa).

Mg(2+) is bound by residues Asp8 and Glu56.

The protein belongs to the P-Pant transferase superfamily. AcpS family. Mg(2+) serves as cofactor.

It is found in the cytoplasm. It catalyses the reaction apo-[ACP] + CoA = holo-[ACP] + adenosine 3',5'-bisphosphate + H(+). Its function is as follows. Transfers the 4'-phosphopantetheine moiety from coenzyme A to a Ser of acyl-carrier-protein. The sequence is that of Holo-[acyl-carrier-protein] synthase from Clostridium perfringens (strain SM101 / Type A).